Reading from the N-terminus, the 170-residue chain is Crossover junction endodeoxyribonuclease RuvC (170 aa).

Active-site residues include Asp11, Glu71, and Asp143. Mg(2+)-binding residues include Asp11, Glu71, and Asp143.

Belongs to the RuvC family. Homodimer which binds Holliday junction (HJ) DNA. The HJ becomes 2-fold symmetrical on binding to RuvC with unstacked arms; it has a different conformation from HJ DNA in complex with RuvA. In the full resolvosome a probable DNA-RuvA(4)-RuvB(12)-RuvC(2) complex forms which resolves the HJ. Requires Mg(2+) as cofactor.

Its subcellular location is the cytoplasm. It carries out the reaction Endonucleolytic cleavage at a junction such as a reciprocal single-stranded crossover between two homologous DNA duplexes (Holliday junction).. In terms of biological role, the RuvA-RuvB-RuvC complex processes Holliday junction (HJ) DNA during genetic recombination and DNA repair. Endonuclease that resolves HJ intermediates. Cleaves cruciform DNA by making single-stranded nicks across the HJ at symmetrical positions within the homologous arms, yielding a 5'-phosphate and a 3'-hydroxyl group; requires a central core of homology in the junction. The consensus cleavage sequence is 5'-(A/T)TT(C/G)-3'. Cleavage occurs on the 3'-side of the TT dinucleotide at the point of strand exchange. HJ branch migration catalyzed by RuvA-RuvB allows RuvC to scan DNA until it finds its consensus sequence, where it cleaves and resolves the cruciform DNA. This chain is Crossover junction endodeoxyribonuclease RuvC, found in Agrobacterium fabrum (strain C58 / ATCC 33970) (Agrobacterium tumefaciens (strain C58)).